The chain runs to 96 residues: Glutamyl-tRNA(Gln) amidotransferase subunit C (96 aa).

The protein belongs to the GatC family. In terms of assembly, heterotrimer of A, B and C subunits.

It catalyses the reaction L-glutamyl-tRNA(Gln) + L-glutamine + ATP + H2O = L-glutaminyl-tRNA(Gln) + L-glutamate + ADP + phosphate + H(+). The catalysed reaction is L-aspartyl-tRNA(Asn) + L-glutamine + ATP + H2O = L-asparaginyl-tRNA(Asn) + L-glutamate + ADP + phosphate + 2 H(+). In terms of biological role, allows the formation of correctly charged Asn-tRNA(Asn) or Gln-tRNA(Gln) through the transamidation of misacylated Asp-tRNA(Asn) or Glu-tRNA(Gln) in organisms which lack either or both of asparaginyl-tRNA or glutaminyl-tRNA synthetases. The reaction takes place in the presence of glutamine and ATP through an activated phospho-Asp-tRNA(Asn) or phospho-Glu-tRNA(Gln). In Halalkalibacterium halodurans (strain ATCC BAA-125 / DSM 18197 / FERM 7344 / JCM 9153 / C-125) (Bacillus halodurans), this protein is Glutamyl-tRNA(Gln) amidotransferase subunit C.